An 887-amino-acid polypeptide reads, in one-letter code: Alanine--tRNA ligase (887 aa).

Zn(2+) is bound by residues His579, His583, Cys681, and His685.

Belongs to the class-II aminoacyl-tRNA synthetase family. Zn(2+) is required as a cofactor.

Its subcellular location is the cytoplasm. It catalyses the reaction tRNA(Ala) + L-alanine + ATP = L-alanyl-tRNA(Ala) + AMP + diphosphate. Functionally, catalyzes the attachment of alanine to tRNA(Ala) in a two-step reaction: alanine is first activated by ATP to form Ala-AMP and then transferred to the acceptor end of tRNA(Ala). Also edits incorrectly charged Ser-tRNA(Ala) and Gly-tRNA(Ala) via its editing domain. The polypeptide is Alanine--tRNA ligase (Flavobacterium psychrophilum (strain ATCC 49511 / DSM 21280 / CIP 103535 / JIP02/86)).